Here is a 301-residue protein sequence, read N- to C-terminus: Haloalkane dehalogenase (301 aa).

An AB hydrolase-1 domain is found at P47–D284. D123 serves as the catalytic Nucleophile. D250 acts as the Proton donor in catalysis. Residue H279 is the Proton acceptor of the active site.

The protein belongs to the haloalkane dehalogenase family. Type 1 subfamily. In terms of assembly, monomer.

The catalysed reaction is 1-haloalkane + H2O = a halide anion + a primary alcohol + H(+). Catalyzes hydrolytic cleavage of carbon-halogen bonds in halogenated aliphatic compounds, leading to the formation of the corresponding primary alcohols, halide ions and protons. The polypeptide is Haloalkane dehalogenase (Mycolicibacterium paratuberculosis (strain ATCC BAA-968 / K-10) (Mycobacterium paratuberculosis)).